The primary structure comprises 69 residues: Large ribosomal subunit protein eL38z/eL38y (69 aa).

The protein belongs to the eukaryotic ribosomal protein eL38 family.

This Arabidopsis thaliana (Mouse-ear cress) protein is Large ribosomal subunit protein eL38z/eL38y (RPL38A).